A 336-amino-acid polypeptide reads, in one-letter code: Tetraacyldisaccharide 4'-kinase (336 aa).

60 to 67 (TVGGTGKT) lines the ATP pocket.

Belongs to the LpxK family.

The catalysed reaction is a lipid A disaccharide + ATP = a lipid IVA + ADP + H(+). It participates in glycolipid biosynthesis; lipid IV(A) biosynthesis; lipid IV(A) from (3R)-3-hydroxytetradecanoyl-[acyl-carrier-protein] and UDP-N-acetyl-alpha-D-glucosamine: step 6/6. Transfers the gamma-phosphate of ATP to the 4'-position of a tetraacyldisaccharide 1-phosphate intermediate (termed DS-1-P) to form tetraacyldisaccharide 1,4'-bis-phosphate (lipid IVA). The chain is Tetraacyldisaccharide 4'-kinase from Pseudomonas fluorescens (strain SBW25).